The following is a 209-amino-acid chain: Prolactin (209 aa).

A signal peptide spans 1–24 (MAQRFKGSNLFLTALLCLASQGHA). 2 disulfide bridges follow: cysteine 70-cysteine 184 and cysteine 201-cysteine 209.

The protein belongs to the somatotropin/prolactin family.

It localises to the secreted. The polypeptide is Prolactin (prl) (Anguilla japonica (Japanese eel)).